We begin with the raw amino-acid sequence, 33 residues long: Rhinophrynin-33 (33 aa).

Expressed by the skin glands.

It localises to the secreted. Its function is as follows. Non-cytotoxic peptide with immunosuppressive and insulinotropic effects. Induces an increased production of the anti-inflammatory cytokine IL-10 and inhibits production of the pro-inflammatory cytokines TNF-alpha and IL-1beta, when incubated with mouse peritoneal cells. Does not display growth-inhibitory activity against the Gram-positive S.epidermidis and Gram-negative E.coli bacteria and against the opportunistic yeast pathogen C.parapsilosis (MIC&gt;128 uM). In addition, it lacks cytotoxic activity against mouse erythrocytes (LC(50)&gt;500 uM) and A549 human non-small cell lung adenocarcinoma cells (LC(50)&gt;100 uM). Moderately stimulates insulin release from rat clonal beta-cells and mouse pancreatic islets. In terms of biological role, non-cytotoxic peptide with immunosuppressive but without insulinotropic effects. Inhibits production of the pro-inflammatory cytokines TNF-alpha, but has no effect on IL-10 and IL-1beta production, when incubated with mouse peritoneal cells. Has no activity of stimulation of insulin release. This is Rhinophrynin-33 from Rhinophrynus dorsalis (Mexican burrowing toad).